The sequence spans 651 residues: Chaperone protein HtpG (651 aa).

The a; substrate-binding stretch occupies residues 1 to 353; that stretch reads MAPHVEQLEF…AQDMSLNVSR (353 aa). The tract at residues 354–569 is b; that stretch reads EILQQDRQIR…TFGITPALAR (216 aa). Residues 570–651 are c; sequence MYRASGQPVP…RLTRMVGEQS (82 aa).

Belongs to the heat shock protein 90 family. As to quaternary structure, homodimer.

Its subcellular location is the cytoplasm. Molecular chaperone. Has ATPase activity. In Mycolicibacterium gilvum (strain PYR-GCK) (Mycobacterium gilvum (strain PYR-GCK)), this protein is Chaperone protein HtpG.